The sequence spans 483 residues: 3-isopropylmalate dehydratase large subunit (483 aa).

Residues C352, C412, and C415 each contribute to the [4Fe-4S] cluster site.

It belongs to the aconitase/IPM isomerase family. LeuC type 1 subfamily. As to quaternary structure, heterodimer of LeuC and LeuD. Requires [4Fe-4S] cluster as cofactor.

The enzyme catalyses (2R,3S)-3-isopropylmalate = (2S)-2-isopropylmalate. Its pathway is amino-acid biosynthesis; L-leucine biosynthesis; L-leucine from 3-methyl-2-oxobutanoate: step 2/4. Its function is as follows. Catalyzes the isomerization between 2-isopropylmalate and 3-isopropylmalate, via the formation of 2-isopropylmaleate. This chain is 3-isopropylmalate dehydratase large subunit, found in Paenarthrobacter aurescens (strain TC1).